Reading from the N-terminus, the 60-residue chain is Large ribosomal subunit protein uL30 (60 aa).

The protein belongs to the universal ribosomal protein uL30 family. As to quaternary structure, part of the 50S ribosomal subunit.

The sequence is that of Large ribosomal subunit protein uL30 from Aromatoleum aromaticum (strain DSM 19018 / LMG 30748 / EbN1) (Azoarcus sp. (strain EbN1)).